The following is a 117-amino-acid chain: Immunoglobulin heavy variable 1-3 (117 aa).

Residues 1–19 (MDWTWRILFLVAAATGAHS) form the signal peptide. Positions 20 to 44 (QVQLVQSGAEVKKPGASVKVSCKAS) are framework-1. One can recognise an Ig-like domain in the interval 20-117 (QVQLVQSGAE…EDTAVYYCAR (98 aa)). An intrachain disulfide couples Cys41 to Cys115. A complementarity-determining-1 region spans residues 45–52 (GYTFTSYA). The framework-2 stretch occupies residues 53-69 (MHWVRQAPGQRLEWMGW). The segment at 70–77 (INAGNGNT) is complementarity-determining-2. The tract at residues 78–115 (KYSQKFQGRVTITRDTSASTAYMELSSLRSEDTAVYYC) is framework-3. The interval 116–117 (AR) is complementarity-determining-3.

Immunoglobulins are composed of two identical heavy chains and two identical light chains; disulfide-linked.

The protein localises to the secreted. The protein resides in the cell membrane. In terms of biological role, v region of the variable domain of immunoglobulin heavy chains that participates in the antigen recognition. Immunoglobulins, also known as antibodies, are membrane-bound or secreted glycoproteins produced by B lymphocytes. In the recognition phase of humoral immunity, the membrane-bound immunoglobulins serve as receptors which, upon binding of a specific antigen, trigger the clonal expansion and differentiation of B lymphocytes into immunoglobulins-secreting plasma cells. Secreted immunoglobulins mediate the effector phase of humoral immunity, which results in the elimination of bound antigens. The antigen binding site is formed by the variable domain of one heavy chain, together with that of its associated light chain. Thus, each immunoglobulin has two antigen binding sites with remarkable affinity for a particular antigen. The variable domains are assembled by a process called V-(D)-J rearrangement and can then be subjected to somatic hypermutations which, after exposure to antigen and selection, allow affinity maturation for a particular antigen. This Homo sapiens (Human) protein is Immunoglobulin heavy variable 1-3.